Here is a 255-residue protein sequence, read N- to C-terminus: H-2 class II histocompatibility antigen, E-K alpha chain (255 aa).

An N-terminal signal peptide occupies residues 1–25; it reads MATIGALVLRFFFIAVLMSSQKSWA. The segment at 26 to 109 is alpha-1; it reads IKEEHTIIQA…ERSNNTPDAN (84 aa). Residues 26-216 are Extracellular-facing; the sequence is IKEEHTIIQA…EKTLLPETKE (191 aa). The interval 110–203 is alpha-2; that stretch reads VAPEVTVLSR…GLEEPLRKHW (94 aa). The Ig-like C1-type domain occupies 112 to 204; the sequence is PEVTVLSRSP…LEEPLRKHWE (93 aa). A disulfide bridge links cysteine 132 with cysteine 188. Asparagine 143 carries N-linked (GlcNAc...) asparagine glycosylation. Residues 204–216 are connecting peptide; the sequence is EFEEKTLLPETKE. A helical membrane pass occupies residues 217–242; sequence NVVCALGLFVGLVGIVVGIILIMKGI. Over 243 to 255 the chain is Cytoplasmic; it reads KKRNVVERRQGAL.

The protein belongs to the MHC class II family.

It is found in the membrane. The protein is H-2 class II histocompatibility antigen, E-K alpha chain of Mus musculus (Mouse).